The following is a 169-amino-acid chain: Peptide deformylase (169 aa).

Residues Cys-91 and His-133 each contribute to the Fe cation site. Glu-134 is an active-site residue. His-137 provides a ligand contact to Fe cation.

This sequence belongs to the polypeptide deformylase family. Fe(2+) is required as a cofactor.

The enzyme catalyses N-terminal N-formyl-L-methionyl-[peptide] + H2O = N-terminal L-methionyl-[peptide] + formate. Functionally, removes the formyl group from the N-terminal Met of newly synthesized proteins. Requires at least a dipeptide for an efficient rate of reaction. N-terminal L-methionine is a prerequisite for activity but the enzyme has broad specificity at other positions. The chain is Peptide deformylase from Shigella boydii serotype 18 (strain CDC 3083-94 / BS512).